Here is a 455-residue protein sequence, read N- to C-terminus: Keratin, type I cuticular Ha5 (455 aa).

Positions 1–97 (MASKCLKAGF…FGEGILTGNE (97 aa)) are head. The IF rod domain occupies 97–408 (EKETMQSLND…GLLESEDSKL (312 aa)). The interval 98–132 (KETMQSLNDRLAGYLEKVRQLEQENASLESRIREW) is coil 1A. The segment at 133–143 (CEQQVPYMCPD) is linker 1. The coil 1B stretch occupies residues 144–244 (YQSYFRTIEE…HEEEVNSLRC (101 aa)). A linker 12 region spans residues 245-260 (QLGDRLNVEVDAAPPV). Positions 261-404 (DLNRVLEEMR…NTYRGLLESE (144 aa)) are coil 2. Residues 405–455 (DSKLPCNPCAPDYSPSKSCLPCLPAASCGPSAARTNCSPRPICVPCPGGRF) form a tail region.

The protein belongs to the intermediate filament family. In terms of tissue distribution, early expression in the hair follicle, mainly found in supramatricial cells and lowermost cortical cells of the hair bulb.

This chain is Keratin, type I cuticular Ha5 (KRT35), found in Homo sapiens (Human).